A 366-amino-acid chain; its full sequence is Anhydro-N-acetylmuramic acid kinase (366 aa).

Position 15-22 (15-22) interacts with ATP; it reads GTSLDGVD.

Belongs to the anhydro-N-acetylmuramic acid kinase family.

The enzyme catalyses 1,6-anhydro-N-acetyl-beta-muramate + ATP + H2O = N-acetyl-D-muramate 6-phosphate + ADP + H(+). It participates in amino-sugar metabolism; 1,6-anhydro-N-acetylmuramate degradation. It functions in the pathway cell wall biogenesis; peptidoglycan recycling. Functionally, catalyzes the specific phosphorylation of 1,6-anhydro-N-acetylmuramic acid (anhMurNAc) with the simultaneous cleavage of the 1,6-anhydro ring, generating MurNAc-6-P. Is required for the utilization of anhMurNAc either imported from the medium or derived from its own cell wall murein, and thus plays a role in cell wall recycling. In Hydrogenovibrio crunogenus (strain DSM 25203 / XCL-2) (Thiomicrospira crunogena), this protein is Anhydro-N-acetylmuramic acid kinase.